Reading from the N-terminus, the 580-residue chain is G1/S-specific cyclin CLN3 (580 aa).

Residues 454–469 (FTPTSSSSSPSPFNSP) are compositionally biased toward low complexity. Disordered stretches follow at residues 454-498 (FTPT…QNSF) and 546-580 (MATAHPCSAPTQLKKRSTSSVDCDFNDSSNLKKTR). Composition is skewed to polar residues over residues 470–480 (YKTSSSMTTPD) and 563–580 (TSSVDCDFNDSSNLKKTR).

This sequence belongs to the cyclin family.

Essential for the control of the cell cycle at the G1/S (start) transition. CLN3 may be an upstream activator of the G1 cyclins which directly catalyze start. The polypeptide is G1/S-specific cyclin CLN3 (CLN3) (Saccharomyces cerevisiae (strain ATCC 204508 / S288c) (Baker's yeast)).